Here is a 118-residue protein sequence, read N- to C-terminus: Ferredoxin-thioredoxin reductase, catalytic chain (118 aa).

A [4Fe-4S] cluster-binding site is contributed by Cys-57. Cys-59 acts as the Nucleophile in catalysis. Cys-59 and Cys-89 are oxidised to a cystine. [4Fe-4S] cluster contacts are provided by Cys-76, Cys-78, and Cys-87.

This sequence belongs to the ferredoxin thioredoxin reductase beta subunit family. In terms of assembly, heterodimer of subunit A (variable subunit) and subunit B (catalytic subunit). Heterodimeric FTR forms a complex with ferredoxin and thioredoxin. [4Fe-4S] cluster is required as a cofactor.

Its subcellular location is the plastid. The protein localises to the chloroplast. It catalyses the reaction [thioredoxin]-disulfide + 2 reduced [2Fe-2S]-[ferredoxin] + 2 H(+) = [thioredoxin]-dithiol + 2 oxidized [2Fe-2S]-[ferredoxin]. Catalytic subunit of the ferredoxin-thioredoxin reductase (FTR), which catalyzes the two-electron reduction of thioredoxins by the electrons provided by reduced ferredoxin. This chain is Ferredoxin-thioredoxin reductase, catalytic chain (ftrB), found in Porphyra purpurea (Red seaweed).